Consider the following 261-residue polypeptide: Aromatic peroxygenase (261 aa).

Position 36 (C36) interacts with heme. N-linked (GlcNAc...) asparagine glycosylation is found at N100, N137, N141, and N220.

Belongs to the chloroperoxidase family. It depends on heme b as a cofactor. N-glycosylated.

In terms of biological role, aromatic peroxidase that oxidizes aryl alcohols into the corresponding aldehydes and then into the corresponding benzoic acids. Catalyzes the regioselective peroxide-dependent hydroxylation of naphthalene to 1-naphthol and to a far lesser extent 2-naphthol via a naphthalene 1,2-oxide intermediate. Halogenates phenol to 2-bromophenol and 4-bromophenol. Oxidizes the sulfur-containing heterocycle dibenzothiophene to yield sulfoxidation products, and trace amounts of ring-hydroxylation products. The protein is Aromatic peroxygenase of Coprinellus radians (Coprophilous mushroom).